A 145-amino-acid polypeptide reads, in one-letter code: Large ribosomal subunit protein bL9 (145 aa).

It belongs to the bacterial ribosomal protein bL9 family.

In terms of biological role, binds to the 23S rRNA. In Mesomycoplasma hyopneumoniae (strain 232) (Mycoplasma hyopneumoniae), this protein is Large ribosomal subunit protein bL9.